The chain runs to 382 residues: uncharacterized protein (382 aa).

Transmembrane regions (helical) follow at residues 14–34 (GLLL…LWLA), 45–65 (VVSS…GYVI), 75–95 (YLAS…IGFW), 102–122 (FVAG…LMCS), 131–151 (LLAA…LLVS), 157–177 (LMSV…PLLF), 206–226 (VNGC…MPLF), 235–255 (ASIG…QWPI), 270–290 (VQVF…AMAP), 291–311 (ALFI…AWAC), 325–345 (ALLL…AMLM), and 348–368 (FSDN…LLML).

This sequence belongs to the major facilitator superfamily. YcaD (TC 2.A.1.26) family.

Its subcellular location is the cell inner membrane. This is an uncharacterized protein from Escherichia coli O17:K52:H18 (strain UMN026 / ExPEC).